Here is an 82-residue protein sequence, read N- to C-terminus: M-zodatoxin-Lt3b (82 aa).

Residues 1–22 (MKTYAVLLALVVAFVCIAESTG) form the signal peptide. A propeptide spanning residues 23 to 61 (YPVEDLEDDELTELEAEALLEDLLEDLELEDLDYNEEAR) is cleaved from the precursor. The Processing quadruplet motif motif lies at 58–61 (EEAR). Alanine amide is present on alanine 81.

Cleavage of the propeptide depends on the processing quadruplet motif (XXXR, with at least one of X being E). In terms of tissue distribution, expressed by the venom gland.

Its subcellular location is the secreted. It has antimicrobial activity against Gram-positive bacteria (A.globiformis VKM Ac-1112 (MIC=0.7 uM), and B.subtilis VKM B-501 (MIC=2.9 uM)), Gram-negative bacteria (E.coli DH5-alpha (MIC=23 uM), E.coli MH1 (MIC=28 uM), and P.aeruginosa PAO1 (MIC&gt;45 uM)), and yeasts (P.pastoris GS115 (MIC=23 uM), and S.cerevisiae Y190 (MIC=23 uM)). Does not have hemolytic against rabbit erythrocytes. Causes paralysis, but is not lethal when injected into insect (M.domestica) larvae. The sequence is that of M-zodatoxin-Lt3b from Lachesana tarabaevi (Spider).